Reading from the N-terminus, the 867-residue chain is Transcription factor E2F8 (867 aa).

Positions 38 to 58 (DFGPLTTPTKPKEGSQGEPWT) are disordered. Residues serine 71 and serine 102 each carry the phosphoserine modification. 2 DNA-binding regions span residues 113 to 182 (RKEK…TWHG) and 261 to 347 (RKDK…KWTG). 3 disordered regions span residues 408-432 (RRKINSAPSSPIKTNKAESSQNSAP), 532-616 (QSVT…SGSK), and 771-800 (APENAGTQQGRATNYDSPVPGQSQPNGQSV). Residues serine 413 and serine 417 each carry the phosphoserine modification. 2 stretches are compositionally biased toward polar residues: residues 413–432 (SAPSSPIKTNKAESSQNSAP) and 532–556 (QSVTPPQGLSPTVCTTHSSKATGSK). The span at 557 to 567 (DSTDATTEKAA) shows a compositional bias: basic and acidic residues. The span at 568-579 (NDTSKASASTRP) shows a compositional bias: polar residues. Over residues 594–604 (RTREPAGERGS) the composition is skewed to basic and acidic residues. Polar residues predominate over residues 775-800 (AGTQQGRATNYDSPVPGQSQPNGQSV).

It belongs to the E2F/DP family. In terms of assembly, homodimer and heterodimer: mainly forms homodimers and, to a lesser extent, heterodimers with E2F8. Dimerization is important for DNA-binding. Interacts with HIF1A.

The protein localises to the nucleus. In terms of biological role, atypical E2F transcription factor that participates in various processes such as angiogenesis and polyploidization of specialized cells. Mainly acts as a transcription repressor that binds DNA independently of DP proteins and specifically recognizes the E2 recognition site 5'-TTTC[CG]CGC-3'. Directly represses transcription of classical E2F transcription factors such as E2F1: component of a feedback loop in S phase by repressing the expression of E2F1, thereby preventing p53/TP53-dependent apoptosis. Plays a key role in polyploidization of cells in placenta and liver by regulating the endocycle, probably by repressing genes promoting cytokinesis and antagonizing action of classical E2F proteins (E2F1, E2F2 and/or E2F3). Required for placental development by promoting polyploidization of trophoblast giant cells. Acts as a promoter of sprouting angiogenesis, possibly by acting as a transcription activator: associates with HIF1A, recognizes and binds the VEGFA promoter, which is different from canonical E2 recognition site, and activates expression of the VEGFA gene. The sequence is that of Transcription factor E2F8 (E2F8) from Homo sapiens (Human).